The primary structure comprises 334 residues: Phospholipase A1 1 (334 aa).

Positions 1 to 23 are cleaved as a signal peptide; sequence MMNLKYLLFFCLVQALHYCYAYG. The propeptide occupies 24–33; that stretch reads DPSLSNELDR. Cysteines 37 and 120 form a disulfide. The active-site Nucleophile is the S170. Catalysis depends on D198, which acts as the Charge relay system. 2 cysteine pairs are disulfide-bonded: C209/C214 and C252/C261. The Charge relay system role is filled by H263. 3 disulfide bridges follow: C278–C302, C279–C327, and C295–C300.

This sequence belongs to the AB hydrolase superfamily. Lipase family. Post-translationally, not glycosylated. Expressed by the venom gland.

It is found in the secreted. It catalyses the reaction a 1,2-diacyl-sn-glycero-3-phosphocholine + H2O = a 2-acyl-sn-glycero-3-phosphocholine + a fatty acid + H(+). Its function is as follows. Catalyzes the hydrolysis of phosphatidylcholine with phospholipase A1 activity (3.6 U/ml). May act as an allergen and induce hemolytic activity. In vivo, a mixture of this protein and Ves a 1.02 is able to paralyze crickets. The protein is Phospholipase A1 1 of Vespa affinis (Lesser banded hornet).